A 644-amino-acid chain; its full sequence is Coiled-coil domain-containing protein 22 homolog (644 aa).

A disordered region spans residues 316 to 341; that stretch reads DEQKAAAMAGLSESGPPKMDTEEELQ. Coiled-coil stretches lie at residues 333-383, 409-486, and 592-644; these read KMDT…NEQV, DAEN…GKDD, and GVIM…LKSS.

The protein belongs to the CCDC22 family.

This Nematostella vectensis (Starlet sea anemone) protein is Coiled-coil domain-containing protein 22 homolog.